We begin with the raw amino-acid sequence, 131 residues long: Small ribosomal subunit protein uS8 (131 aa).

Belongs to the universal ribosomal protein uS8 family. As to quaternary structure, part of the 30S ribosomal subunit. Contacts proteins S5 and S12.

Functionally, one of the primary rRNA binding proteins, it binds directly to 16S rRNA central domain where it helps coordinate assembly of the platform of the 30S subunit. This is Small ribosomal subunit protein uS8 from Finegoldia magna (strain ATCC 29328 / DSM 20472 / WAL 2508) (Peptostreptococcus magnus).